We begin with the raw amino-acid sequence, 177 residues long: MAELTTIARPYAKAAFDFAIENNAVDSWAEMLNFAALVSENESMKPLLTGGLASGKLAALFISVCGEQVNTQGQNLIKVMAENGRLEVLAAVSELFTGYRNEWAKEVEASVVSAIELSSEQQQQVSVSLEKRLARKVKLNCSTDTTLIAGMIIRAGDLVIDGSVSGQLARLSDKLQS.

The protein belongs to the ATPase delta chain family. In terms of assembly, F-type ATPases have 2 components, F(1) - the catalytic core - and F(0) - the membrane proton channel. F(1) has five subunits: alpha(3), beta(3), gamma(1), delta(1), epsilon(1). F(0) has three main subunits: a(1), b(2) and c(10-14). The alpha and beta chains form an alternating ring which encloses part of the gamma chain. F(1) is attached to F(0) by a central stalk formed by the gamma and epsilon chains, while a peripheral stalk is formed by the delta and b chains.

The protein localises to the cell inner membrane. In terms of biological role, f(1)F(0) ATP synthase produces ATP from ADP in the presence of a proton or sodium gradient. F-type ATPases consist of two structural domains, F(1) containing the extramembraneous catalytic core and F(0) containing the membrane proton channel, linked together by a central stalk and a peripheral stalk. During catalysis, ATP synthesis in the catalytic domain of F(1) is coupled via a rotary mechanism of the central stalk subunits to proton translocation. Its function is as follows. This protein is part of the stalk that links CF(0) to CF(1). It either transmits conformational changes from CF(0) to CF(1) or is implicated in proton conduction. This Shewanella denitrificans (strain OS217 / ATCC BAA-1090 / DSM 15013) protein is ATP synthase subunit delta.